We begin with the raw amino-acid sequence, 388 residues long: MTSVSLGMPAAPPPVLAPRRKTRQIKVGSVGVGSDSPISVQSMTTTPTTDINATLQQIAELTASGCDIVRVACPSADDAEALPIIARKSQIPVIADIHFQPKYVFAAIEAGCAAVRVNPGNIRKFDDQVKEIAAAARDHGTSIRIGVNAGSLEPGILKKYGKATPEALVESAVWEASLFEEHGFHDFKISVKHNDPVIMVAAYEMLAEKGDWPLHLGVTEAGPAFQGTIKSATAFGALLSRGIGDTIRVSLSAPPVEEIKVGNQILQSLNLRPRKLEIVSCPSCGRAQVDVYTLAEQVTAGLEGMEIPLRVAVMGCVVNGPGEAREADLGVASGNGKGQIFVKGEVIKTVPESQIVETLIEEAMRIAEEMGEADGEDAVKGGPVVSVS.

Residues C281, C284, C316, and E323 each coordinate [4Fe-4S] cluster.

This sequence belongs to the IspG family. Requires [4Fe-4S] cluster as cofactor.

It catalyses the reaction (2E)-4-hydroxy-3-methylbut-2-enyl diphosphate + oxidized [flavodoxin] + H2O + 2 H(+) = 2-C-methyl-D-erythritol 2,4-cyclic diphosphate + reduced [flavodoxin]. It participates in isoprenoid biosynthesis; isopentenyl diphosphate biosynthesis via DXP pathway; isopentenyl diphosphate from 1-deoxy-D-xylulose 5-phosphate: step 5/6. Functionally, converts 2C-methyl-D-erythritol 2,4-cyclodiphosphate (ME-2,4cPP) into 1-hydroxy-2-methyl-2-(E)-butenyl 4-diphosphate. The chain is 4-hydroxy-3-methylbut-2-en-1-yl diphosphate synthase (flavodoxin) from Pseudarthrobacter chlorophenolicus (strain ATCC 700700 / DSM 12829 / CIP 107037 / JCM 12360 / KCTC 9906 / NCIMB 13794 / A6) (Arthrobacter chlorophenolicus).